Reading from the N-terminus, the 382-residue chain is Putative glutamate--cysteine ligase 2-1 (382 aa).

This sequence belongs to the glutamate--cysteine ligase type 2 family. YbdK subfamily.

The enzyme catalyses L-cysteine + L-glutamate + ATP = gamma-L-glutamyl-L-cysteine + ADP + phosphate + H(+). ATP-dependent carboxylate-amine ligase which exhibits weak glutamate--cysteine ligase activity. This chain is Putative glutamate--cysteine ligase 2-1, found in Frankia casuarinae (strain DSM 45818 / CECT 9043 / HFP020203 / CcI3).